The chain runs to 133 residues: Covalently-linked cell wall protein 12 (133 aa).

The N-terminal stretch at 1–18 (MQFSTVASIAAVAAVASA) is a signal peptide. N-linked (GlcNAc...) asparagine glycosylation occurs at N21. O-linked (Man) threonine glycans are attached at residues T23, T24, and T26. O-linked (Man) serine glycans are attached at residues S28 and S31. O-linked (Man) threonine glycosylation is found at T32, T33, T36, and T38. O-linked (Man) serine glycosylation is found at S39 and S46. An O-linked (Man) threonine glycan is attached at T48. 2 repeat units span residues 75-88 (TTEA…TAAP) and 91-103 (STEA…SAAP). The interval 79 to 104 (PKNGTSTAAPVTSTEAPKNTTSAAPT) is disordered. K80 is covalently cross-linked (Glycyl lysine isopeptide (Lys-Gly) (interchain with G-Cter in ubiquitin)). N81 and N97 each carry an N-linked (GlcNAc...) asparagine glycan. A compositionally biased stretch (polar residues) spans 81 to 104 (NGTSTAAPVTSTEAPKNTTSAAPT). G112 carries GPI-anchor amidated glycine lipidation. Positions 113-133 (AAAKALPAAGALLAGAAALLL) are cleaved as a propeptide — removed in mature form.

To yeast protein YDR134C. Post-translationally, extensively O-glycosylated; glycans consist probably of single mannose residues. N-glycosylated. The GPI-anchor is attached to the protein in the endoplasmic reticulum and serves to target the protein to the cell surface. There, the glucosamine-inositol phospholipid moiety is cleaved off and the GPI-modified mannoprotein is covalently attached via its lipidless GPI glycan remnant to the 1,6-beta-glucan of the outer cell wall layer.

It is found in the secreted. It localises to the cell wall. Its subcellular location is the membrane. Its function is as follows. Component of the cell wall. May play a role in the formation of a tightly packed outer mannan layer, which protects the inner glucan. The sequence is that of Covalently-linked cell wall protein 12 (CCW12) from Saccharomyces cerevisiae (strain ATCC 204508 / S288c) (Baker's yeast).